We begin with the raw amino-acid sequence, 286 residues long: Release factor glutamine methyltransferase (286 aa).

Residues 122–126 (GTGTG), aspartate 145, tryptophan 173, and asparagine 188 each bind S-adenosyl-L-methionine. Substrate is bound at residue 188-191 (NPPY).

The protein belongs to the protein N5-glutamine methyltransferase family. PrmC subfamily.

It catalyses the reaction L-glutaminyl-[peptide chain release factor] + S-adenosyl-L-methionine = N(5)-methyl-L-glutaminyl-[peptide chain release factor] + S-adenosyl-L-homocysteine + H(+). In terms of biological role, methylates the class 1 translation termination release factors RF1/PrfA and RF2/PrfB on the glutamine residue of the universally conserved GGQ motif. The chain is Release factor glutamine methyltransferase from Shewanella oneidensis (strain ATCC 700550 / JCM 31522 / CIP 106686 / LMG 19005 / NCIMB 14063 / MR-1).